A 1317-amino-acid polypeptide reads, in one-letter code: DNA-directed RNA polymerase subunit beta' (1317 aa).

Zn(2+) contacts are provided by Cys-60, Cys-62, Cys-75, and Cys-78. The Mg(2+) site is built by Asp-535, Asp-537, and Asp-539. The Zn(2+) site is built by Cys-890, Cys-967, Cys-974, and Cys-977.

It belongs to the RNA polymerase beta' chain family. The RNAP catalytic core consists of 2 alpha, 1 beta, 1 beta' and 1 omega subunit. When a sigma factor is associated with the core the holoenzyme is formed, which can initiate transcription. The cofactor is Mg(2+). It depends on Zn(2+) as a cofactor.

It catalyses the reaction RNA(n) + a ribonucleoside 5'-triphosphate = RNA(n+1) + diphosphate. In terms of biological role, DNA-dependent RNA polymerase catalyzes the transcription of DNA into RNA using the four ribonucleoside triphosphates as substrates. This is DNA-directed RNA polymerase subunit beta' from Nocardia farcinica (strain IFM 10152).